The following is a 319-amino-acid chain: Ribonuclease Z (319 aa).

His62, His64, Asp66, His67, His145, Asp215, and His273 together coordinate Zn(2+). Asp66 functions as the Proton acceptor in the catalytic mechanism.

It belongs to the RNase Z family. In terms of assembly, homodimer. The cofactor is Zn(2+).

The enzyme catalyses Endonucleolytic cleavage of RNA, removing extra 3' nucleotides from tRNA precursor, generating 3' termini of tRNAs. A 3'-hydroxy group is left at the tRNA terminus and a 5'-phosphoryl group is left at the trailer molecule.. Zinc phosphodiesterase, which displays some tRNA 3'-processing endonuclease activity. Probably involved in tRNA maturation, by removing a 3'-trailer from precursor tRNA. This chain is Ribonuclease Z, found in Borreliella burgdorferi (strain ATCC 35210 / DSM 4680 / CIP 102532 / B31) (Borrelia burgdorferi).